Consider the following 243-residue polypeptide: Ubiquinone/menaquinone biosynthesis C-methyltransferase UbiE (243 aa).

S-adenosyl-L-methionine contacts are provided by residues threonine 69, aspartate 90, and aspartate 116 to alanine 117.

Belongs to the class I-like SAM-binding methyltransferase superfamily. MenG/UbiE family.

The enzyme catalyses a 2-demethylmenaquinol + S-adenosyl-L-methionine = a menaquinol + S-adenosyl-L-homocysteine + H(+). It catalyses the reaction a 2-methoxy-6-(all-trans-polyprenyl)benzene-1,4-diol + S-adenosyl-L-methionine = a 5-methoxy-2-methyl-3-(all-trans-polyprenyl)benzene-1,4-diol + S-adenosyl-L-homocysteine + H(+). It participates in quinol/quinone metabolism; menaquinone biosynthesis; menaquinol from 1,4-dihydroxy-2-naphthoate: step 2/2. Its pathway is cofactor biosynthesis; ubiquinone biosynthesis. In terms of biological role, methyltransferase required for the conversion of demethylmenaquinol (DMKH2) to menaquinol (MKH2) and the conversion of 2-polyprenyl-6-methoxy-1,4-benzoquinol (DDMQH2) to 2-polyprenyl-3-methyl-6-methoxy-1,4-benzoquinol (DMQH2). The chain is Ubiquinone/menaquinone biosynthesis C-methyltransferase UbiE from Paraburkholderia phytofirmans (strain DSM 17436 / LMG 22146 / PsJN) (Burkholderia phytofirmans).